The following is a 576-amino-acid chain: K(+)/H(+) antiporter NhaP2 (576 aa).

Transmembrane regions (helical) follow at residues 6–26 (INSFFLIGALLTAVSVLLSPM), 34–54 (ILLIFLAVGILAGEDGPGGIL), 58–78 (YSTAYLVSNLALAIILLDGGM), 87–107 (VALWPALSLATFGVAITTSIT), 109–129 (MMAAWLFDLHWLQGLLVGAIV), 163–183 (PMAVFLTVTLIAILANVDTEM), 185–205 (FSFMFISFIKQFGLGICLGLG), 219–239 (LADGLYSILVLSGGLIIYAAS), 242–262 (LGGSGILSIYLVGLFLGNKPT), 271–291 (VLDGMTWVSQIGMFLVLGLLL), 299–319 (ILIPGFALAFGMILFARPVAV), 335–355 (WFISWVGLRGAVPIILAVFPM), and 359–379 (LPGAQLYFNLAFFVVLVSLLV). Positions 405 to 486 (SGVEIYPSSE…LEALSNLFSQ (82 aa)) constitute an RCK C-terminal domain.

Belongs to the monovalent cation:proton antiporter 1 (CPA1) transporter (TC 2.A.36) family. NhaP2 subfamily.

Its subcellular location is the cell inner membrane. The catalysed reaction is K(+)(in) + H(+)(out) = K(+)(out) + H(+)(in). Functionally, k(+)/H(+) antiporter that extrudes potassium in exchange for external protons and maintains the internal concentration of potassium under toxic levels. This Shewanella baltica (strain OS195) protein is K(+)/H(+) antiporter NhaP2.